The primary structure comprises 590 residues: Selenoprotein N (590 aa).

Residues Met1–Arg26 are disordered. The signal sequence occupies residues Met1–Ala43. Residues Arg9–Pro23 are compositionally biased toward pro residues. The EF-hand domain maps to Thr67–Ser102. An N-linked (GlcNAc...) asparagine glycan is attached at Asn126. Sec127 is a non-standard amino acid (selenocysteine). A glycan (N-linked (GlcNAc...) asparagine) is linked at Asn190. Sec462 is a non-standard amino acid (selenocysteine). Residues Asn483, Asn505, and Asn531 are each glycosylated (N-linked (GlcNAc...) asparagine).

In terms of assembly, interacts with RYR1, RYR2 and RYR3. Post-translationally, N-glycosylated. As to expression, isoform 1 and isoform 2 are expressed in skeletal muscle, brain, lung and placenta. Isoform 2 is also expressed in heart, diaphragm and stomach.

It is found in the endoplasmic reticulum membrane. Plays an important role in cell protection against oxidative stress and in the regulation of redox-related calcium homeostasis. Regulates the calcium level of the ER by protecting the calcium pump ATP2A2 against the oxidoreductase ERO1A-mediated oxidative damage. Within the ER, ERO1A activity increases the concentration of H(2)O(2), which attacks the luminal thiols in ATP2A2 and thus leads to cysteinyl sulfenic acid formation (-SOH) and SEPN1 reduces the SOH back to free thiol (-SH), thus restoring ATP2A2 activity. Acts as a modulator of ryanodine receptor (RyR) activity: protects RyR from oxidation due to increased oxidative stress, or directly controls the RyR redox state, regulating the RyR-mediated calcium mobilization required for normal muscle development and differentiation. Its function is as follows. Essential for muscle regeneration and satellite cell maintenance in skeletal muscle. The sequence is that of Selenoprotein N from Homo sapiens (Human).